A 488-amino-acid chain; its full sequence is UDP-N-acetylmuramate--L-alanine ligase (488 aa).

127–133 (GTHGKTT) lines the ATP pocket.

This sequence belongs to the MurCDEF family.

It localises to the cytoplasm. It carries out the reaction UDP-N-acetyl-alpha-D-muramate + L-alanine + ATP = UDP-N-acetyl-alpha-D-muramoyl-L-alanine + ADP + phosphate + H(+). It functions in the pathway cell wall biogenesis; peptidoglycan biosynthesis. Cell wall formation. The chain is UDP-N-acetylmuramate--L-alanine ligase from Shewanella baltica (strain OS223).